The chain runs to 2025 residues: Pericentriolar material 1 protein (2025 aa).

The tract at residues Met1–Gln91 is disordered. Position 2 is an N-acetylalanine (Ala2). Residues Ala2–Thr1458 form a mediates interaction with DZIP1 region. Phosphoserine occurs at positions 65, 68, 69, 93, 110, 116, 119, and 159. A disordered region spans residues Asp111 to Pro140. Residues Ser116–Arg132 are compositionally biased toward polar residues. A coiled-coil region spans residues Lys218–Ala301. Positions Arg354 to Pro390 are disordered. Residues Glu369–Val385 show a composition bias toward polar residues. The residue at position 370 (Ser370) is a Phosphoserine. Phosphoserine; by PLK4 is present on Ser372. Residue Ser384 is modified to Phosphoserine. Residue Lys399 is modified to N6-acetyllysine. Coiled-coil stretches lie at residues Lys399–Asn426 and Ala492–Thr518. Disordered stretches follow at residues Glu528–Ile553 and Val565–Asn586. The segment covering Lys531–Tyr540 has biased composition (acidic residues). The residue at position 593 (Ser593) is a Phosphoserine. The interval Ala620–Glu654 is disordered. Residues Glu623–Gly633 show a composition bias toward acidic residues. Positions Val634 to Ser644 are enriched in low complexity. Ser644 is subject to Phosphoserine. Coiled coils occupy residues Glu652–Gln772 and Ser822–Glu856. Phosphothreonine is present on Thr857. Phosphoserine occurs at positions 859, 864, 867, and 870. 2 disordered regions span residues Arg866 to Met885 and Thr913 to Ser940. Polar residues predominate over residues Ser870–Ser879. Thr875 bears the Phosphothreonine mark. Phosphoserine is present on residues Ser957, Ser974, Ser985, and Ser988. 2 coiled-coil regions span residues Ser985–Leu1017 and Gln1061–His1086. Disordered stretches follow at residues Arg1081 to Pro1105 and Phe1149 to Glu1213. Residues His1086–Gly1096 are compositionally biased toward basic and acidic residues. Positions Phe1149–Gly1169 are enriched in polar residues. Ser1182 and Ser1185 each carry phosphoserine. Residues Glu1189–Glu1198 are compositionally biased toward basic and acidic residues. 5 positions are modified to phosphoserine: Ser1228, Ser1254, Ser1257, Ser1259, and Ser1260. Residues Glu1230 to Asn1310 form a disordered region. Polar residues predominate over residues Thr1268–Leu1285. 2 positions are modified to phosphoserine: Ser1315 and Ser1317. Positions Ser1319–Pro1338 are disordered. Thr1466 bears the Phosphothreonine mark. Phosphoserine is present on residues Ser1571, Ser1695, Ser1729, Ser1766, Ser1769, Ser1777, and Ser1783. A disordered region spans residues Lys1720 to Val1943. Over residues Tyr1756 to Val1768 the composition is skewed to basic and acidic residues. A compositionally biased stretch (polar residues) spans Ile1784 to Gly1798. The span at Gly1800 to Pro1816 shows a compositional bias: acidic residues. Polar residues-rich tracts occupy residues Asp1818 to Glu1828, Glu1849 to Glu1858, Glu1879 to Gln1901, and Ala1925 to Ala1934. Residues Ser1959 and Ser1978 each carry the phosphoserine modification.

This sequence belongs to the PCM1 family. As to quaternary structure, self-associates. Interacts with BBS4, BBS8, CETN3, HAP1, NDE1, NDEL1, MAP1LC3B, GABARAPAL2, and GABARAP. Interacts with CEP131; the interaction increases in response to ultraviolet light (UV) radiation. Associates with microtubule; association to microtubule is reduced in response to cellular stress, such as ultraviolet light (UV) radiation or heat shock, in a process that requires p38 MAP kinase signaling. Interacts with C2CD3. Interacts with CFAP263. Interacts with SSX2IP. Interacts with CCDC13. Interacts with CEP290. Interacts with PARD6A. Interacts with KIAA0753/OFIP, CEP20/FOR20 and OFD1; the interaction with CEP20/FOR20 and OFD1 may be mediated by KIAA0753/OFIP. Interacts with CCDC66. Interacts with CCDC61. Interacts with DZIP1; localizes DZIP1 and the associated BBSome to centriolar satellite. Interacts with CSTPP1, TTLL1, TPGS1 and LRRC49. Interacts with CFAP53. Post-translationally, ubiquitinated. Undergoes monoubiquitination catalyzed by the E3 ubiquitin-protein ligase MIB1 in proliferating cells, preventing cilia formation. Monoubiquitination by MIB1 is inhibited in response to cellular stress, such as ultraviolet light (UV) radiation or heat shock, resulting in cilia formation initiation. In terms of processing, phosphorylated on multiple serine and threonine residues by DYRK3 during the G2-to-M transition, after the nuclear-envelope breakdown. Phosphorylation by DYRK3 promotes disassembly of pericentriolar material. Phosphorylation at Ser-372 mediated by PLK4 is required to maintain the integrity of centriolar satellites. In terms of tissue distribution, expressed in the hippocampus and dentate gyrus, the columnar epithelial cells of bronchioles, the olfactory epithelium, the pericardium and the inner segment of the retina.

It localises to the cytoplasm. The protein localises to the cytoskeleton. Its subcellular location is the microtubule organizing center. It is found in the centrosome. The protein resides in the cytoplasmic granule. It localises to the centriolar satellite. The protein localises to the cilium basal body. In terms of biological role, required for centrosome assembly and function. Essential for the correct localization of several centrosomal proteins including CEP250, CETN3, PCNT and NEK2. Required to anchor microtubules to the centrosome. Also involved in cilium biogenesis by recruiting the BBSome, a ciliary protein complex involved in cilium biogenesis, to the centriolar satellites. Recruits the tubulin polyglutamylase complex (TPGC) to centriolar satellites. This Mus musculus (Mouse) protein is Pericentriolar material 1 protein.